The primary structure comprises 583 residues: MAPISIADIVAALPAEDTWGPATSTDNMLQGVPYAPFSKGDKLGRMADWTSESKDQRTGRQAYNRNFRDQQVYGAGSSNLFSIQAAEDESSFSVVDNTRTSAKRTFGRGGGTVFRGRAQRGAGQRGGRAGFQRVGAGRGQGDRFYDNRGGRSNRGRRFGWKDYDKPQRTREPSVNVRPDWTMLEEVDFSRLLKLNLETPDGEDVDSYGFLYYYDRSYDKAPVKGAERRLQSLDRAAYNVTTSQDPVIQELAEKDAATVFATSDILSMLMCAPRSVYSWDIVIVHQGNKIYFDKREGASLDLVTVNENAIDAPLELAESSAKQESINTPSALAMEATFINHNFALQTVAESQDAKVDMKNANPFYNASEETEPLASKAYKYRRFDLSLERDEEPLNMVVRTEVDALLKNPVNGEDQQLIVKALNEFDSKAQGSGNALDWRSKLWSQRGAVVATEMKNNSLKLARWTTQAVLAKADGMKLGFVSRANPRSAAGHVVLGVVGYKPRDLAAQMNLNLGNGWGIVRTIVDRIRALDAEEDEEKVKKYVLIKDPNRPVLRLYSVPANTFEEDEEAAAEEEEQKAEEDEE.

The interval 116 to 150 is disordered; sequence GRAQRGAGQRGGRAGFQRVGAGRGQGDRFYDNRGG. Over residues 140 to 149 the composition is skewed to basic and acidic residues; sequence QGDRFYDNRG. The RNA gate stretch occupies residues 298–312; sequence SLDLVTVNENAIDAP. A disordered region spans residues 561–583; it reads NTFEEDEEAAAEEEEQKAEEDEE. The segment covering 563-583 has biased composition (acidic residues); that stretch reads FEEDEEAAAEEEEQKAEEDEE.

The protein belongs to the eIF-3 subunit D family. Component of the eukaryotic translation initiation factor 3 (eIF-3) complex.

The protein localises to the cytoplasm. In terms of biological role, mRNA cap-binding component of the eukaryotic translation initiation factor 3 (eIF-3) complex, which is involved in protein synthesis of a specialized repertoire of mRNAs and, together with other initiation factors, stimulates binding of mRNA and methionyl-tRNAi to the 40S ribosome. The eIF-3 complex specifically targets and initiates translation of a subset of mRNAs involved in cell proliferation. In the eIF-3 complex, eif3d specifically recognizes and binds the 7-methylguanosine cap of a subset of mRNAs. This chain is Eukaryotic translation initiation factor 3 subunit D, found in Aspergillus oryzae (strain ATCC 42149 / RIB 40) (Yellow koji mold).